Here is a 353-residue protein sequence, read N- to C-terminus: Tetrahedral aminopeptidase (353 aa).

Residues histidine 68 and aspartate 182 each contribute to the Zn(2+) site. The Proton acceptor role is filled by glutamate 212. 3 residues coordinate Zn(2+): glutamate 213, aspartate 235, and histidine 323.

The protein belongs to the peptidase M42 family. As to quaternary structure, homododecamer. The assembly of six dimers results in a tetrahedral-shaped structure; all 12 active sites are located on the inside of the tetrahedron. Substrate access is granted by four pores with a maximal diameter of 18 Angstroms, allowing only small peptides and unfolded proteins access to the active site. Beside the four entry ports, TET contains 12 small product release openings, which are large enough to allow passage of only single amino acid residues. Zn(2+) serves as cofactor. It depends on Co(2+) as a cofactor.

With respect to regulation, inhibited by EDTA and bestatin in vitro. Is insensitive to papain, antipain, chymostatin, leupeptin, pepstatin and aprotinin. Functions as an aminopeptidase, with a clear preference for leucine as the N-terminal amino acid. However, can also cleave moderately long polypeptide substrates of various compositions in a fairly unspecific manner. Has neither carboxypeptidase nor endoproteolytic activities, and it is devoid of N-terminal deblocking activity. Is involved in protein degradation, performing degradation of oligopeptides produced by the proteasome into single amino acids. This chain is Tetrahedral aminopeptidase (frvX), found in Pyrococcus horikoshii (strain ATCC 700860 / DSM 12428 / JCM 9974 / NBRC 100139 / OT-3).